The chain runs to 616 residues: Spastin (616 aa).

Positions 1-44 are disordered; sequence MNSPGGRGKKKGSGGPSSPVPPRPPPPCLASSRPAPRPAPPPQS. A required for nuclear localization region spans residues 1–50; it reads MNSPGGRGKKKGSGGPSSPVPPRPPPPCLASSRPAPRPAPPPQSPHKRNL. Residues 1–56 lie on the Cytoplasmic side of the membrane; that stretch reads MNSPGGRGKKKGSGGPSSPVPPRPPPPCLASSRPAPRPAPPPQSPHKRNLYYFSYP. Residues 1–80 are required for interaction with ATL1; the sequence is MNSPGGRGKK…LGLLFVWLCQ (80 aa). The tract at residues 1 to 194 is required for midbody localization; sequence MNSPGGRGKK…LVMAKDRLQL (194 aa). The segment at 1–300 is required for interaction with RTN1; it reads MNSPGGRGKK…STPKTNRTNK (300 aa). The short motif at 4–11 is the Nuclear localization signal element; it reads PGGRGKKK. 2 stretches are compositionally biased toward pro residues: residues 18-28 and 35-44; these read SPVPPRPPPPC and APRPAPPPQS. A required for interaction with SSNA1 and microtubules region spans residues 50-87; sequence LYYFSYPLFLGFALLRLVAFHLGLLFVWLCQRFSRALM. Residues 57–77 constitute an intramembrane region (helical); sequence LFLGFALLRLVAFHLGLLFVW. Residues 59–67 carry the Nuclear export signal motif; it reads LGFALLRLV. Residues 78-616 are Cytoplasmic-facing; that stretch reads LCQRFSRALM…WNKDFGDTTV (539 aa). Positions 112 to 196 are sufficient for interaction with CHMP1B; it reads EVERVRAFHK…MAKDRLQLLE (85 aa). The segment at 114-200 is required for interaction with microtubules; the sequence is ERVRAFHKQA…RLQLLEKLQP (87 aa). The MIT domain occupies 120 to 195; that stretch reads HKQAFEYISV…VMAKDRLQLL (76 aa). The segment at 223 to 266 is disordered; it reads GHLQSESGAVPKRKDPLTHPSNSLPRSKAIMKTGSTGLSGHHRA. Residues 226 to 328 are sufficient for interaction with microtubules; that stretch reads QSESGAVPKR…NVDSNLANFI (103 aa). The tract at residues 228 to 616 is sufficient for microtubule severing; the sequence is ESGAVPKRKD…WNKDFGDTTV (389 aa). S245 and S268 each carry phosphoserine. Residues 270–328 form a required for interaction with microtubules and microtubule severing region; sequence SGLSIVSGMRQGPGPTTATHKSTPKTNRTNKPSTPTTAPRKKKDLKNFRNVDSNLANFI. The tract at residues 278–311 is disordered; the sequence is MRQGPGPTTATHKSTPKTNRTNKPSTPTTAPRKK. Over residues 283–306 the composition is skewed to polar residues; sequence GPTTATHKSTPKTNRTNKPSTPTT. The residue at position 306 (T306) is a Phosphothreonine. Residues 309-312 carry the Nuclear localization signal motif; that stretch reads RKKK. Residues 310–312 form a required for interaction with microtubules region; that stretch reads KKK. 382–389 lines the ATP pocket; sequence GPPGNGKT. S597 carries the phosphoserine modification.

This sequence belongs to the AAA ATPase family. Spastin subfamily. In terms of assembly, homohexamer. Mostly monomeric, but assembles into hexameric structure for short periods of time. Oligomerization seems to be a prerequisite for catalytic activity. Binding to ATP in a cleft between two adjacent subunits stabilizes the homohexameric form. Binds to microtubules at least in part via the alpha-tubulin and beta-tubulin tails. The hexamer adopts a ring conformation through which microtubules pass prior to being severed. Does not interact strongly with tubulin heterodimers. Interacts (via MIT domain) with CHMP1B; the interaction is direct. Interacts with SSNA1. Interacts with ATL1. Interacts with RTN1. Interacts with ZFYVE27. Interacts with REEP1. Interacts (via MIT domain) with IST1.

It is found in the membrane. The protein localises to the endoplasmic reticulum. The protein resides in the midbody. It localises to the cytoplasm. Its subcellular location is the cytoskeleton. It is found in the microtubule organizing center. The protein localises to the centrosome. The protein resides in the perinuclear region. It localises to the nucleus. Its subcellular location is the spindle. It is found in the cell projection. The protein localises to the axon. The enzyme catalyses n ATP + n H2O + a microtubule = n ADP + n phosphate + (n+1) alpha/beta tubulin heterodimers.. Its activity is regulated as follows. Allosteric enzyme with a cooperative mechanism; at least two neighbor subunits influence each other strongly in spastin hexamers. Microtubule binding promotes cooperative interactions among spastin subunits. In terms of biological role, ATP-dependent microtubule severing protein that specifically recognizes and cuts microtubules that are polyglutamylated. Preferentially recognizes and acts on microtubules decorated with short polyglutamate tails: severing activity increases as the number of glutamates per tubulin rises from one to eight, but decreases beyond this glutamylation threshold. Severing activity is not dependent on tubulin acetylation or detyrosination. Microtubule severing promotes reorganization of cellular microtubule arrays and the release of microtubules from the centrosome following nucleation. It is critical for the biogenesis and maintenance of complex microtubule arrays in axons, spindles and cilia. SPAST is involved in abscission step of cytokinesis and nuclear envelope reassembly during anaphase in cooperation with the ESCRT-III complex. Recruited at the midbody, probably by IST1, and participates in membrane fission during abscission together with the ESCRT-III complex. Recruited to the nuclear membrane by IST1 and mediates microtubule severing, promoting nuclear envelope sealing and mitotic spindle disassembly during late anaphase. Required for membrane traffic from the endoplasmic reticulum (ER) to the Golgi and endosome recycling. Recruited by IST1 to endosomes and regulates early endosomal tubulation and recycling by mediating microtubule severing. Probably plays a role in axon growth and the formation of axonal branches. This chain is Spastin, found in Sus scrofa (Pig).